A 199-amino-acid polypeptide reads, in one-letter code: Gamma-glutamylcyclotransferase 2-3 (199 aa).

A substrate-binding site is contributed by 5–10 (VFGYGS). The Proton acceptor role is filled by Glu-86.

Belongs to the gamma-glutamylcyclotransferase family. The cofactor is Mn(2+).

The protein localises to the cytoplasm. It carries out the reaction glutathione = L-cysteinylglycine + 5-oxo-L-proline. In terms of biological role, converts GSH to 5-oxoproline and cysteine-glycine (Cys-Gly) dipeptide in vitro and plays a significant role in glutathione (GSH) homeostasis. Has no activity towards gamma-glutamyl-L-cysteine but possesses very low activity towards gamma-glutamyl-L-alanine. This Arabidopsis thaliana (Mouse-ear cress) protein is Gamma-glutamylcyclotransferase 2-3.